The sequence spans 281 residues: Ribosomal RNA large subunit methyltransferase J (281 aa).

Residues H19, H42, S101, E119, 144–145, and D165 each bind S-adenosyl-L-methionine; that span reads NG. The active-site Proton acceptor is the D165.

Belongs to the RlmJ family. As to quaternary structure, monomer.

It catalyses the reaction adenosine(2030) in 23S rRNA + S-adenosyl-L-methionine = N(6)-methyladenosine(2030) in 23S rRNA + S-adenosyl-L-homocysteine + H(+). Its function is as follows. Specifically methylates the adenine in position 2030 of 23S rRNA. The polypeptide is Ribosomal RNA large subunit methyltransferase J (Haemophilus influenzae (strain ATCC 51907 / DSM 11121 / KW20 / Rd)).